The chain runs to 162 residues: Transmembrane protein 92 (162 aa).

Residues 1-22 form the signal peptide; that stretch reads MLDTWVWGTLTLTFGLLSSLQG. Residues 23–63 are Extracellular-facing; sequence VSFNETANTCDILNCPKGFTCCVKECCPERKVWDPANDRFR. Residues 64–84 traverse the membrane as a helical segment; sequence FLVILACIIFPILFICALVSL. At 85-162 the chain is on the cytoplasmic side; that stretch reads FCPNCTELQH…QMRGRAYATL (78 aa). Residues 134–162 are disordered; the sequence is TPPTEPPPPYSLRPEGPAGQMRGRAYATL.

The protein localises to the membrane. The chain is Transmembrane protein 92 (Tmem92) from Mus musculus (Mouse).